The following is a 238-amino-acid chain: Uridylate kinase (238 aa).

Residue 11–14 participates in ATP binding; it reads KLSG. Gly52 is a UMP binding site. The ATP site is built by Gly53 and Arg57. UMP is bound by residues Asp72 and 134 to 141; that span reads TGFSYFTT. Positions 162, 168, and 171 each coordinate ATP.

It belongs to the UMP kinase family. Homohexamer.

It is found in the cytoplasm. It carries out the reaction UMP + ATP = UDP + ADP. Its pathway is pyrimidine metabolism; CTP biosynthesis via de novo pathway; UDP from UMP (UMPK route): step 1/1. Inhibited by UTP. In terms of biological role, catalyzes the reversible phosphorylation of UMP to UDP. The protein is Uridylate kinase of Mesoplasma florum (strain ATCC 33453 / NBRC 100688 / NCTC 11704 / L1) (Acholeplasma florum).